The chain runs to 1823 residues: Bromodomain-containing protein DDB_G0280777 (1823 aa).

Disordered regions lie at residues 44 to 83 (DNNN…EEDE) and 200 to 281 (LKQT…RTTS). Basic and acidic residues predominate over residues 65–77 (SNKEEEKEEKEEK). Residues 210–224 (KRRNQQHQNLLKKQK) show a composition bias toward basic residues. Basic and acidic residues predominate over residues 225-250 (IQKEKEEREQKEKEQKEKEQKEKEEQ). The segment covering 251-262 (QQQLFLLQQQQQ) has biased composition (low complexity). The region spanning 306-413 (EAQEEMYDQL…KKSKDLMKNV (108 aa)) is the Bromo domain. Disordered stretches follow at residues 429–654 (ENKN…EEQT), 753–781 (NCNN…NNSL), 855–886 (INDN…NNKP), 949–993 (NSSK…DEDF), 1055–1079 (LPNN…PPPS), 1190–1386 (IDPK…IQAS), 1453–1477 (QLQQ…QTPQ), and 1679–1823 (QQQQ…QKKQ). 4 stretches are compositionally biased toward low complexity: residues 432–486 (NNNN…NTPL), 494–511 (CSPS…TPQS), 520–555 (QQQQ…ISPR), and 570–579 (SSSSLSSSSL). A compositionally biased stretch (polar residues) spans 580 to 590 (ALNSQNENGVN). Positions 601 to 614 (MESEESTNVKKEEN) are enriched in basic and acidic residues. The segment covering 631–643 (EGEEQQEQEDEEQ) has biased composition (acidic residues). Low complexity-rich tracts occupy residues 753 to 779 (NCNN…NNNN), 863 to 884 (NNNN…NNNN), 949 to 958 (NSSKSNNNSN), 1055 to 1071 (LPNN…TTQL), and 1205 to 1378 (NNNN…NNNN). Positions 1679–1705 (QQQQPQQQQQQPQQQPQQQPQQQQQPQ) are enriched in low complexity. 2 stretches are compositionally biased toward basic and acidic residues: residues 1716-1737 (PKEK…EKDR) and 1744-1755 (KTESKKESKKSL). 2 stretches are compositionally biased toward low complexity: residues 1756-1767 (NDSSNSDINTSV) and 1789-1806 (SSKQ…TQDS). Positions 1813 to 1823 (KKKRGRPQKKQ) are enriched in basic residues.

This is Bromodomain-containing protein DDB_G0280777 from Dictyostelium discoideum (Social amoeba).